The primary structure comprises 172 residues: Large ribosomal subunit protein uL10 (172 aa).

Belongs to the universal ribosomal protein uL10 family. Part of the ribosomal stalk of the 50S ribosomal subunit. The N-terminus interacts with L11 and the large rRNA to form the base of the stalk. The C-terminus forms an elongated spine to which L12 dimers bind in a sequential fashion forming a multimeric L10(L12)X complex.

Functionally, forms part of the ribosomal stalk, playing a central role in the interaction of the ribosome with GTP-bound translation factors. The protein is Large ribosomal subunit protein uL10 of Methylorubrum populi (strain ATCC BAA-705 / NCIMB 13946 / BJ001) (Methylobacterium populi).